Reading from the N-terminus, the 670-residue chain is UvrABC system protein B (670 aa).

Residues 28 to 414 form the Helicase ATP-binding domain; that stretch reads NNFKQGLQEQ…KKIPIVEQII (387 aa). Residue 41–48 coordinates ATP; that stretch reads GATGTGKT. The short motif at 94–117 is the Beta-hairpin element; it reads YYDYYQPEAYVASSDTYIEKDSKI. In terms of domain architecture, Helicase C-terminal spans 432 to 594; that stretch reads QMDDLYFEIK…VTPTALNKTI (163 aa). The UVR domain maps to 631-666; it reads NKEIKRLQKMMKEAAKTLDFEKAATLRDLILELEKK.

Belongs to the UvrB family. As to quaternary structure, forms a heterotetramer with UvrA during the search for lesions. Interacts with UvrC in an incision complex.

It is found in the cytoplasm. Its function is as follows. The UvrABC repair system catalyzes the recognition and processing of DNA lesions. A damage recognition complex composed of 2 UvrA and 2 UvrB subunits scans DNA for abnormalities. Upon binding of the UvrA(2)B(2) complex to a putative damaged site, the DNA wraps around one UvrB monomer. DNA wrap is dependent on ATP binding by UvrB and probably causes local melting of the DNA helix, facilitating insertion of UvrB beta-hairpin between the DNA strands. Then UvrB probes one DNA strand for the presence of a lesion. If a lesion is found the UvrA subunits dissociate and the UvrB-DNA preincision complex is formed. This complex is subsequently bound by UvrC and the second UvrB is released. If no lesion is found, the DNA wraps around the other UvrB subunit that will check the other stand for damage. This is UvrABC system protein B from Onion yellows phytoplasma (strain OY-M).